A 127-amino-acid polypeptide reads, in one-letter code: Large ribosomal subunit protein bL19 (127 aa).

The protein belongs to the bacterial ribosomal protein bL19 family.

This protein is located at the 30S-50S ribosomal subunit interface and may play a role in the structure and function of the aminoacyl-tRNA binding site. This Jannaschia sp. (strain CCS1) protein is Large ribosomal subunit protein bL19.